Here is a 459-residue protein sequence, read N- to C-terminus: Phosphoglucosamine mutase (459 aa).

Ser-100 acts as the Phosphoserine intermediate in catalysis. The Mg(2+) site is built by Ser-100, Asp-256, Asp-258, and Asp-260. Ser-100 carries the post-translational modification Phosphoserine.

This sequence belongs to the phosphohexose mutase family. It depends on Mg(2+) as a cofactor. Activated by phosphorylation.

The enzyme catalyses alpha-D-glucosamine 1-phosphate = D-glucosamine 6-phosphate. Its function is as follows. Catalyzes the conversion of glucosamine-6-phosphate to glucosamine-1-phosphate. The polypeptide is Phosphoglucosamine mutase (Heliobacterium modesticaldum (strain ATCC 51547 / Ice1)).